The chain runs to 268 residues: GTP cyclohydrolase FolE2 (268 aa).

It belongs to the GTP cyclohydrolase IV family.

It catalyses the reaction GTP + H2O = 7,8-dihydroneopterin 3'-triphosphate + formate + H(+). It functions in the pathway cofactor biosynthesis; 7,8-dihydroneopterin triphosphate biosynthesis; 7,8-dihydroneopterin triphosphate from GTP: step 1/1. Converts GTP to 7,8-dihydroneopterin triphosphate. The chain is GTP cyclohydrolase FolE2 from Ralstonia nicotianae (strain ATCC BAA-1114 / GMI1000) (Ralstonia solanacearum).